A 238-amino-acid polypeptide reads, in one-letter code: MHKLFYLLSLLMAPFVANANFMIYPISKDLKNGNSELVRVYSKSKEIQYIKIYTKKIINPGTTEEYKVDIPNWDGGLVVTPQKVILPAGASKSIRLTQFKIPKKEEVYRVYFEAVKPDSKENVIDNKKLTTELSVNIIYAALIRSLPSEQNISLNISRNAKKNIIIYNNGNVRAGVKDIYFCKSSNIDDNCVKKAYNKNIYPEKSFDTLVNNNFSYVFIKLNHEGIEKEQGLIQLKVP.

The signal sequence occupies residues 1–19 (MHKLFYLLSLLMAPFVANA).

The protein resides in the fimbrium. Functionally, might function as a shuttle protein in the transport of fimbria through the periplasmic space or might function as an adhesin. This Escherichia coli protein is CFA/I fimbrial subunit A (cfaA).